We begin with the raw amino-acid sequence, 49 residues long: Toxic protein HokB (49 aa).

Residues 4-24 (NPLVVCLLIICITILTFTLLT) form a helical membrane-spanning segment.

Belongs to the Hok/Gef family.

Its subcellular location is the cell inner membrane. Toxic component of a type I toxin-antitoxin (TA) system. When overexpressed kills cells within minutes; causes collapse of the transmembrane potential and arrest of respiration. Expression leads to membrane depolarization; when protein levels are high enough depolarization probably leads to lowered metabolic activity which in turn induces some cells to enter the persistent state in which they transiently survive antibiotic exposure. Its toxic effect is probably neutralized by antisense antitoxin RNA SokB, which is encoded in trans on the opposite DNA strand. This is Toxic protein HokB from Escherichia coli (strain K12).